The chain runs to 200 residues: Serine/arginine-rich splicing factor RSZ22 (200 aa).

One can recognise an RRM domain in the interval 2–71 (SRVYVGNLDP…NGWRVEQSHN (70 aa)). Basic and acidic residues predominate over residues 62-83 (NGWRVEQSHNRGERGGGGRGGD). 2 disordered regions span residues 62–97 (NGWRVEQSHNRGERGGGGRGGDRGGGGGGRGGRGGS) and 112–200 (RECR…RSRS). Residues 84–96 (RGGGGGGRGGRGG) show a composition bias toward gly residues. Residues 99-116 (LKCYECGETGHFARECRN) form a CCHC-type zinc finger. Positions 120 to 137 (TGRRRSKSRSRTPPRYRR) are enriched in basic residues. Phosphoserine occurs at positions 138, 147, 152, 160, 162, 174, and 200. Residues 138-150 (SPSYGRRSYSPRA) are compositionally biased toward low complexity. Residues 151 to 166 (RSPPPPRRRSPSPPPA) are compositionally biased toward pro residues.

This sequence belongs to the splicing factor SR family. RSZ subfamily. Component of the spliceosome. Interacts with AFC2, RS2Z33 and RNU1. Post-translationally, extensively phosphorylated on serine residues in the RS domain. Phosphorylated by AFC2. In terms of tissue distribution, expressed in primary and lateral roots, stems, petioles, abaxial and adaxial epidermis cells, trichomes, unopened flowers, anther filaments, anthers, stigma, pollen, pollen tube, ovule funiculi, integuments, embryo sac and developing seeds.

It localises to the nucleus speckle. The protein resides in the nucleus. The protein localises to the nucleolus. Its subcellular location is the nucleoplasm. It is found in the cytoplasm. In terms of biological role, sequence-specific RNA-binding protein probably involved in pre-mRNA splicing. In vitro, can complement efficiently splicing-deficient mammalian SRSF7-depleted HeLa cell extract. The chain is Serine/arginine-rich splicing factor RSZ22 (RSZ22) from Arabidopsis thaliana (Mouse-ear cress).